The following is a 63-amino-acid chain: Jingdongin-1 (63 aa).

An N-terminal signal peptide occupies residues 1-22 (MLTLKKSMLLLFFLGTINLSLC). A propeptide spanning residues 23 to 44 (EQERDADEEERRDDDEMDVEVE) is cleaved from the precursor. Residues cysteine 57 and cysteine 63 are joined by a disulfide bond.

In terms of tissue distribution, expressed by the skin glands.

It is found in the secreted. Its function is as follows. The synthetic peptide has antimicrobial activity against Gram-negative bacterium B.dysenteriae (MIC=35 ug/ml), against Gram-positive bacteria S.aureus ATCC 2592 (MIC=4.7 ug/ml) and B.subtilis ATCC 6633 (MIC=9.38 ug/ml) and against fungus C.albicans (MIC=18.75 ug/ml). Has no activity against Gram-negative bacterium E.coli ATCC 25922 but exhibits low hemolytic activity at concentrations up to 200 ug/ml. This chain is Jingdongin-1, found in Amolops jingdongensis (Chinese torrent frog).